Here is a 481-residue protein sequence, read N- to C-terminus: 2-methylisoborneol synthase (481 aa).

Disordered regions lie at residues 1–125 (MPDS…PVGP) and 139–160 (QAAV…GPVV). A compositionally biased stretch (pro residues) spans 11-23 (TSLPEQPPAPPAT). Over residues 24-33 (APDAPAATVT) the composition is skewed to low complexity. Composition is skewed to pro residues over residues 52 to 64 (VTRP…PSMP) and 71 to 104 (SSPP…PPAT). Low complexity predominate over residues 105–114 (APETSAATGS). Mg(2+) is bound by residues Asp238, Asp239, Glu243, Asn386, Ser390, and Glu394.

This sequence belongs to the terpene synthase family. 2-methylisoborneol synthase subfamily. Mg(2+) serves as cofactor.

The enzyme catalyses (E)-2-methylgeranyl diphosphate + H2O = 2-methylisoborneol + diphosphate. Catalyzes the cyclization of 2-methylgeranyl diphosphate (2-MeGPP) to 2-methylisoborneol (2-MIB), which likely involves the intermediacy of 2-methyllinalyl diphosphate. This chain is 2-methylisoborneol synthase (tpc), found in Streptomyces lasalocidi (Streptomyces lasaliensis).